A 354-amino-acid polypeptide reads, in one-letter code: Cyclin-D1-2 (354 aa).

Disordered stretches follow at residues 37 to 74 (FFQQ…EEEE) and 331 to 354 (TTAT…RRKM). 2 stretches are compositionally biased toward low complexity: residues 44 to 66 (PAPA…AGSC) and 331 to 346 (TTAT…VSSS).

It belongs to the cyclin family. Cyclin D subfamily.

The chain is Cyclin-D1-2 (CYCD1-2) from Oryza sativa subsp. japonica (Rice).